The chain runs to 88 residues: Defensin-like protein 24 (88 aa).

Residues Met-1 to Ala-23 form the signal peptide. Disulfide bonds link Cys-37/Cys-87, Cys-47/Cys-72, Cys-56/Cys-83, and Cys-60/Cys-85.

It belongs to the DEFL family.

It is found in the secreted. This chain is Defensin-like protein 24, found in Arabidopsis thaliana (Mouse-ear cress).